The sequence spans 93 residues: uncharacterized protein (93 aa).

A run of 2 helical transmembrane segments spans residues 7–27 and 70–90; these read LIFL…LGMI and ILSV…AFGI.

It is found in the cell membrane. This is an uncharacterized protein from Methanocaldococcus jannaschii (strain ATCC 43067 / DSM 2661 / JAL-1 / JCM 10045 / NBRC 100440) (Methanococcus jannaschii).